The primary structure comprises 214 residues: SNNELTNEERNLLSVAYKNVVGARRSSWRVISSIEQKTEGSERKQQMAKDYREKIEKELKDICHEVLTLLDKFLIPKATTAESKVFYLKMKGDYYRYLAEVATGDERQKVIEESQRAYNDAFDIAKNQMQPTHPIRLGLALNFSVFYYEILNAPDRACHLAKQAFDDAIAELDTLNEDSYKDSTLIMQLLRDNLTLWTSDTGGDDDANAPDEHQ.

This sequence belongs to the 14-3-3 family.

The chain is 14-3-3 protein homolog 2 from Schistosoma mansoni (Blood fluke).